We begin with the raw amino-acid sequence, 544 residues long: Chaperonin GroEL (544 aa).

ATP-binding positions include 30–33, Lys51, 87–91, Gly415, and Asp495; these read TLGP and DGTTT.

Belongs to the chaperonin (HSP60) family. In terms of assembly, forms a cylinder of 14 subunits composed of two heptameric rings stacked back-to-back. Interacts with the co-chaperonin GroES.

It localises to the cytoplasm. The enzyme catalyses ATP + H2O + a folded polypeptide = ADP + phosphate + an unfolded polypeptide.. Functionally, together with its co-chaperonin GroES, plays an essential role in assisting protein folding. The GroEL-GroES system forms a nano-cage that allows encapsulation of the non-native substrate proteins and provides a physical environment optimized to promote and accelerate protein folding. The sequence is that of Chaperonin GroEL from Neisseria gonorrhoeae (strain ATCC 700825 / FA 1090).